An 868-amino-acid polypeptide reads, in one-letter code: Paladin (868 aa).

Gly-2 is lipidated: N-myristoyl glycine.

It belongs to the paladin family.

It is found in the cytoplasm. The protein localises to the cytosol. In Gallus gallus (Chicken), this protein is Paladin (PALD1).